The following is a 162-amino-acid chain: Glutathione peroxidase-like peroxiredoxin 2 (162 aa).

Catalysis depends on cysteine 37, which acts as the Cysteine sulfenic acid (-SOH) intermediate. A disulfide bridge links cysteine 37 with cysteine 83.

This sequence belongs to the glutathione peroxidase family. As to quaternary structure, monomer.

It localises to the cytoplasm. It is found in the nucleus. Its subcellular location is the mitochondrion outer membrane. The protein resides in the mitochondrion inner membrane. It catalyses the reaction a hydroperoxide + [thioredoxin]-dithiol = an alcohol + [thioredoxin]-disulfide + H2O. Glutathione peroxidase-like protein that protects cells from phospholipid hydroperoxides and nonphospholipid peroxides during oxidative stress. Plays an important role in the oxidative stress-induced response in the presence of Ca(2+). Has peroxidase activity using preferentially thioredoxin as a reducing power. The redox state of the mitochondrial GPX2 is regulated by TRX1 and TRX2 (cytoplasmic thioredoxin), and by TRX3 (mitochondrial matrix thioredoxin). Involved in sporulation. The sequence is that of Glutathione peroxidase-like peroxiredoxin 2 from Saccharomyces cerevisiae (strain ATCC 204508 / S288c) (Baker's yeast).